A 385-amino-acid chain; its full sequence is Probable threonine protease PRSS50 (385 aa).

The signal sequence occupies residues 1–39; that stretch reads MGRWCQTVARGQRPRTSAPSRAGALLLLLLLLRSAGCWG. Positions 93–358 constitute a Peptidase S1 domain; sequence VSEGKVDPYR…YQHWIWDCLN (266 aa). N-linked (GlcNAc...) asparagine glycosylation occurs at asparagine 133. Cysteines 138 and 154 form a disulfide. Active-site charge relay system residues include histidine 153 and aspartate 206. Intrachain disulfides connect cysteine 240/cysteine 316, cysteine 273/cysteine 296, and cysteine 306/cysteine 334. Residue asparagine 279 is glycosylated (N-linked (GlcNAc...) asparagine). The active-site Charge relay system is threonine 310.

It belongs to the peptidase S1 family. Testis specific. Differentially expressed in some breast cancer tissues.

It is found in the endoplasmic reticulum. Its function is as follows. May be involved in proteolysis through its threonine endopeptidase activity. The polypeptide is Probable threonine protease PRSS50 (PRSS50) (Homo sapiens (Human)).